The following is a 292-amino-acid chain: THO complex subunit 4B (292 aa).

A disordered region spans residues 1-50 (MSGGLDMSLDDIIKSNRKPTGSRGRGGIGGGNNTGGRGGSGSNSGPSRRF). The residue at position 2 (S2) is an N-acetylserine. The span at 23-42 (RGRGGIGGGNNTGGRGGSGS) shows a compositional bias: gly residues. The region spanning 108–185 (TKLYISNLDY…KLMKIEIVGT (78 aa)) is the RRM domain. Residues 241–252 (GGGFGGGNFRGG) show a composition bias toward gly residues. The disordered stretch occupies residues 241 to 292 (GGGFGGGNFRGGRGARGRGGRGSGGRGRDENVSAEDLDAELDKYHKEAMETS). Over residues 280-292 (ELDKYHKEAMETS) the composition is skewed to basic and acidic residues.

It belongs to the ALYREF family. As to quaternary structure, interacts with RH15 and RH56.

The protein localises to the nucleus. The protein resides in the nucleoplasm. Its function is as follows. Export adapter involved in nuclear export of spliced and unspliced mRNA. The polypeptide is THO complex subunit 4B (ALY2) (Arabidopsis thaliana (Mouse-ear cress)).